We begin with the raw amino-acid sequence, 372 residues long: Fatty acid 2-hydroxylase (372 aa).

The region spanning 8-86 is the Cytochrome b5 heme-binding domain; it reads AASFSPSEVQ…LEQYYVGELR (79 aa). His43 and His69 together coordinate heme. 2 consecutive transmembrane segments (helical) span residues 168–188 and 213–233; these read VWYS…WSYY and SMFP…EYLI. Positions 219–361 constitute a Fatty acid hydroxylase domain; sequence FMLGTFLWSL…TKLWDYCFHT (143 aa). Zn(2+) contacts are provided by His234, His239, His257, His260, and His261. The next 2 membrane-spanning stretches (helical) occupy residues 268–288 and 290–310; these read SRLV…YLCM and LILP…GYVL. The Zn(2+) site is built by His315, His319, His336, His339, and His340.

It belongs to the sterol desaturase family. SCS7 subfamily. Zn(2+) serves as cofactor. As to expression, detected in differentiating cultured keratinocytes (at protein level). Detected in epidermis and cultured keratinocytes. Highly expressed in brain and colon. Detected at lower levels in testis, prostate, pancreas and kidney.

Its subcellular location is the endoplasmic reticulum membrane. The protein resides in the microsome membrane. It carries out the reaction a 1,2-saturated fatty acid + 2 Fe(II)-[cytochrome b5] + O2 + 2 H(+) = a (R)-2-hydroxy fatty acid + 2 Fe(III)-[cytochrome b5] + H2O. The enzyme catalyses hexadecanoate + 2 Fe(II)-[cytochrome b5] + O2 + 2 H(+) = (R)-2-hydroxyhexadecanoate + 2 Fe(III)-[cytochrome b5] + H2O. The catalysed reaction is octadecanoate + 2 Fe(II)-[cytochrome b5] + O2 + 2 H(+) = (R)-2-hydroxyoctadecanoate + 2 Fe(III)-[cytochrome b5] + H2O. It catalyses the reaction docosanoate + 2 Fe(II)-[cytochrome b5] + O2 + 2 H(+) = 2-hydroxydocosanoate + 2 Fe(III)-[cytochrome b5] + H2O. It carries out the reaction tetracosanoate + 2 Fe(II)-[cytochrome b5] + O2 + 2 H(+) = (R)-2-hydroxytetracosanoate + 2 Fe(III)-[cytochrome b5] + H2O. It participates in lipid metabolism; fatty acid metabolism. The protein operates within sphingolipid metabolism; galactosylceramide biosynthesis. Catalyzes the hydroxylation of free fatty acids at the C-2 position to produce 2-hydroxy fatty acids, which are building blocks of sphingolipids and glycosphingolipids common in neural tissue and epidermis. FA2H is stereospecific for the production of (R)-2-hydroxy fatty acids. Plays an essential role in the synthesis of galactosphingolipids of the myelin sheath. Responsible for the synthesis of sphingolipids and glycosphingolipids involved in the formation of epidermal lamellar bodies critical for skin permeability barrier. Participates in the synthesis of glycosphingolipids and a fraction of type II wax diesters in sebaceous gland, specifically regulating hair follicle homeostasis. Involved in the synthesis of sphingolipids of plasma membrane rafts, controlling lipid raft mobility and trafficking of raft-associated proteins. The chain is Fatty acid 2-hydroxylase from Homo sapiens (Human).